We begin with the raw amino-acid sequence, 84 residues long: U8-theraphotoxin-Hhn1f (84 aa).

Residues 1–21 (MKVVLLVCLVWMMAMMELVSC) form the signal peptide. Intrachain disulfides connect Cys23-Cys35, Cys29-Cys44, Cys34-Cys67, Cys54-Cys75, and Cys69-Cys81.

The protein belongs to the AVIT (prokineticin) family. Expressed by the venom gland.

Its subcellular location is the secreted. The chain is U8-theraphotoxin-Hhn1f from Cyriopagopus hainanus (Chinese bird spider).